The primary structure comprises 437 residues: Eukaryotic peptide chain release factor subunit 1 (437 aa).

Gln182 is subject to N5-methylglutamine. Lys331 participates in a covalent cross-link: Glycyl lysine isopeptide (Lys-Gly) (interchain with G-Cter in ubiquitin). Ser421 carries the post-translational modification Phosphoserine.

The protein belongs to the eukaryotic release factor 1 family. As to quaternary structure, component of the eRF1-eRF3-GTP ternary complex, composed of SUP45/eRF1, SUP35/eRF3 and GTP. Interacts with TPA1. In terms of processing, N5-methylated on Gln-182 by MTQ2.

It localises to the cytoplasm. Component of the eRF1-eRF3-GTP ternary complex, a ternary complex that mediates translation termination in response to the termination codons. The eRF1-eRF3-GTP complex binds to a stop codon in the ribosomal A-site. SUP45/eRF1 is responsible for stop codon recognition and inducing hydrolysis of peptidyl-tRNA. Following GTP hydrolysis by SUP35/eRF3, SUP35/eRF3 dissociates, permitting SUP45/eRF1 to accommodate fully in the A-site and mediate hydrolysis of peptidyl-tRNA. In Saccharomyces cerevisiae (strain ATCC 204508 / S288c) (Baker's yeast), this protein is Eukaryotic peptide chain release factor subunit 1 (SUP45).